An 859-amino-acid polypeptide reads, in one-letter code: DNA mismatch repair protein MutS (859 aa).

618 to 625 (GPNMGGKS) serves as a coordination point for ATP.

The protein belongs to the DNA mismatch repair MutS family.

In terms of biological role, this protein is involved in the repair of mismatches in DNA. It is possible that it carries out the mismatch recognition step. This protein has a weak ATPase activity. The chain is DNA mismatch repair protein MutS from Shewanella sediminis (strain HAW-EB3).